The following is a 323-amino-acid chain: Phosphatidylglycerol--prolipoprotein diacylglyceryl transferase (323 aa).

The next 3 helical transmembrane spans lie at 15 to 35 (VIQG…ILIS), 58 to 78 (FMFS…TLVY), and 106 to 126 (GMAI…TINT). An a 1,2-diacyl-sn-glycero-3-phospho-(1'-sn-glycerol)-binding site is contributed by Arg-156. A run of 2 helical transmembrane segments spans residues 242 to 262 (GFIF…IEYL) and 289 to 309 (ISMG…WIIV).

This sequence belongs to the Lgt family.

The protein resides in the cell inner membrane. It catalyses the reaction L-cysteinyl-[prolipoprotein] + a 1,2-diacyl-sn-glycero-3-phospho-(1'-sn-glycerol) = an S-1,2-diacyl-sn-glyceryl-L-cysteinyl-[prolipoprotein] + sn-glycerol 1-phosphate + H(+). Its pathway is protein modification; lipoprotein biosynthesis (diacylglyceryl transfer). Functionally, catalyzes the transfer of the diacylglyceryl group from phosphatidylglycerol to the sulfhydryl group of the N-terminal cysteine of a prolipoprotein, the first step in the formation of mature lipoproteins. The protein is Phosphatidylglycerol--prolipoprotein diacylglyceryl transferase of Borreliella afzelii (strain PKo) (Borrelia afzelii).